The primary structure comprises 319 residues: 12-(S)-hydroxy-5,8,10,14-eicosatetraenoic acid receptor (319 aa).

The Extracellular segment spans residues 1–16 (MPFPNCSAPSTVVATA). N-linked (GlcNAc...) asparagine glycosylation is present at N5. A helical transmembrane segment spans residues 17 to 37 (VGVLLGLECGLGLLGNAVALW). Topologically, residues 38–52 (TFLFRVRVWKPYAVY) are cytoplasmic. The chain crosses the membrane as a helical span at residues 53-73 (LLNLALADLLLAACLPFLAAF). The Extracellular portion of the chain corresponds to 74–91 (YLSLQAWHLGRVGCWALH). The helical transmembrane segment at 92 to 110 (FLLDLSRSVGMAFLAAVAL) threads the bilayer. Residues 111-131 (DRYLRVVHPRLKVNLLSPQAA) lie on the Cytoplasmic side of the membrane. A helical membrane pass occupies residues 132–152 (LGVSGLVWLLMVALTCPGLLI). The Extracellular portion of the chain corresponds to 153-180 (SEAAQNSTRCHSFYSRADGSFSIIWQEA). The helical transmembrane segment at 181–201 (LSCLQFVLPFGLIVFCNAGII) threads the bilayer. Topologically, residues 202–219 (RALQKRLREPEKQPKLQR) are cytoplasmic. The chain crosses the membrane as a helical span at residues 220–240 (AQALVTLVVVLFALCFLPCFL). At 241 to 265 (ARVLMHIFQNLGSCRALCAVAHTSD) the chain is on the extracellular side. Residues 266 to 284 (VTGSLTYLHSVLNPVVYCF) traverse the membrane as a helical segment. Over 285-319 (SSPTFRSSYRRVFHTLRGKGQAAEPPDFNPRDSYS) the chain is Cytoplasmic.

Belongs to the G-protein coupled receptor 1 family. As to quaternary structure, interacts with KRAS; in a farnesylation-dependent manner.

The protein resides in the cell membrane. In terms of biological role, high-affinity receptor for 12-(S)-hydroxy-5,8,10,14-eicosatetraenoic acid (12-S-HETE), with much lower affinities for other HETE isomers. 12-S-HETE is a eicosanoid, a 12-lipoxygenase (ALOX12) metabolite of arachidonic acid, involved in many physiologic and pathologic processes. 12-S-HETE-binding leads to activation of ERK1/2 (MAPK3/MAPK1), MEK, and NF-kappa-B pathways leading to cell growth. Plays a crucial role for proliferation, survival and macropinocytosis of KRAS-dependent cancer cells by mediating the translocation of KRAS from the endoplasmic reticulum to the plasma membrane (PM) and its association with the PM. Contributes to enhanced immune responses by inducing dendrite protrusion of small intestinal CX3CR1(+) phagocytes for the uptake of luminal antigens. Acts also as a key receptor for 12-(S)-HETE-mediated liver ischemia reperfusion injury. Proton-sensing G protein-coupled receptor. The sequence is that of 12-(S)-hydroxy-5,8,10,14-eicosatetraenoic acid receptor (GPR31) from Homo sapiens (Human).